The primary structure comprises 283 residues: 2-dehydro-3-deoxyphosphooctonate aldolase (283 aa).

Belongs to the KdsA family.

The protein localises to the cytoplasm. The catalysed reaction is D-arabinose 5-phosphate + phosphoenolpyruvate + H2O = 3-deoxy-alpha-D-manno-2-octulosonate-8-phosphate + phosphate. The protein operates within carbohydrate biosynthesis; 3-deoxy-D-manno-octulosonate biosynthesis; 3-deoxy-D-manno-octulosonate from D-ribulose 5-phosphate: step 2/3. It participates in bacterial outer membrane biogenesis; lipopolysaccharide biosynthesis. The protein is 2-dehydro-3-deoxyphosphooctonate aldolase of Vibrio campbellii (strain ATCC BAA-1116).